The primary structure comprises 555 residues: Glucose-6-phosphate isomerase (555 aa).

D-glucose 6-phosphate contacts are provided by residues 169-170 (GS), 219-224 (SKTFTT), Q364, E368, H399, and K521. E368 functions as the Proton donor in the catalytic mechanism. Residues H399 and K521 contribute to the active site.

This sequence belongs to the GPI family. As to quaternary structure, homodimer.

It is found in the cytoplasm. Its subcellular location is the cytosol. It carries out the reaction alpha-D-glucose 6-phosphate = beta-D-fructose 6-phosphate. The protein operates within carbohydrate degradation; glycolysis; D-glyceraldehyde 3-phosphate and glycerone phosphate from D-glucose: step 2/4. In the cytoplasm, catalyzes the conversion of glucose-6-phosphate to fructose-6-phosphate, the second step in glycolysis, and the reverse reaction during gluconeogenesis. This Candida glabrata (strain ATCC 2001 / BCRC 20586 / JCM 3761 / NBRC 0622 / NRRL Y-65 / CBS 138) (Yeast) protein is Glucose-6-phosphate isomerase (PGI1).